The following is a 364-amino-acid chain: Triacylglycerol lipase (364 aa).

An N-terminal signal peptide occupies residues 1-44; the sequence is MARTMRSRVVAGAVACAMSIAPFAGTTAVMTLATTHAAMAATAP. One can recognise an AB hydrolase-1 domain in the interval 54-266; it reads PIILVHGLSG…AIQPTLSVFG (213 aa). L61 contributes to the substrate binding site. Catalysis depends on S131, which acts as the Nucleophile. Residue Q132 coordinates substrate. Cysteines 234 and 314 form a disulfide. D286 serves as a coordination point for Ca(2+). Active-site charge relay system residues include D308 and H330. Ca(2+) contacts are provided by D332, Q336, and V340.

It belongs to the AB hydrolase superfamily. Pseudomonas lipase family. As to quaternary structure, monomer. Ca(2+) is required as a cofactor.

The protein resides in the secreted. The catalysed reaction is a triacylglycerol + H2O = a diacylglycerol + a fatty acid + H(+). Inhibited by RC-(Rp,Sp)- and SC-(Rp,Sp)-1,2-dioctylcarbamoylglycero-3-O-p-nitrophenyl octylphosphonate. Also inhibited by diethyl-p-nitrophenylphosphate (E600). In terms of biological role, catalyzes the hydrolysis of triacylglycerol. It shows a preference for triacylglycerols with a chain length between 6 and 12 carbons. In Burkholderia cepacia (Pseudomonas cepacia), this protein is Triacylglycerol lipase.